The chain runs to 255 residues: U2 small nuclear ribonucleoprotein A' (255 aa).

LRR repeat units follow at residues 20-41, 43-64, 65-86, and 89-110; these read RDRE…GATL, QFDA…PLLR, RLKT…LDQA, and CLTE…DPLA. The LRRCT domain occupies 123-161; that stretch reads NPVTNKKHYRLYVIYKVPQVRVLDFQKVKLKERQEAEKM. Lysine 172 is modified (N6-acetyllysine; alternate). A Glycyl lysine isopeptide (Lys-Gly) (interchain with G-Cter in SUMO2); alternate cross-link involves residue lysine 172. Residues 174-201 are disordered; that stretch reads IARRSKTFNPGAGLPTDKKKGGPSPGDV. 2 positions are modified to phosphoserine: serine 178 and serine 197. A Glycyl lysine isopeptide (Lys-Gly) (interchain with G-Cter in SUMO2) cross-link involves residue lysine 221. The interval 222–255 is disordered; sequence GLLQSGQIPGRERRSGPTDDGEEEMEEDTVTNGS. Serine 236 and serine 255 each carry phosphoserine. Residues 240-255 are compositionally biased toward acidic residues; it reads DDGEEEMEEDTVTNGS.

Belongs to the U2 small nuclear ribonucleoprotein A family. Identified in the spliceosome B complex. Identified in the spliceosome C complex. Found in a pre-mRNA splicing complex with SFRS4, SFRS5, SNRNP70, SNRPA1, SRRM1 and SRRM2. Found in a pre-mRNA exonic splicing enhancer (ESE) complex with SNRNP70, SNRPA1, SRRM1 and TRA2B. Contributes to the binding of stem loop IV of U2 snRNA with SNRPB2.

The protein resides in the nucleus. Functionally, involved in pre-mRNA splicing as component of the spliceosome. Associated with sn-RNP U2, where it contributes to the binding of stem loop IV of U2 snRNA. This chain is U2 small nuclear ribonucleoprotein A' (SNRPA1), found in Homo sapiens (Human).